The primary structure comprises 243 residues: Geranylgeranylglyceryl phosphate synthase (243 aa).

Mg(2+) contacts are provided by aspartate 22 and serine 51. Residues 169-175, 200-201, and 222-223 each bind sn-glycerol 1-phosphate; these read YLEAGSG, GG, and GT.

It belongs to the GGGP/HepGP synthase family. Group II subfamily. Mg(2+) is required as a cofactor.

Its subcellular location is the cytoplasm. It carries out the reaction sn-glycerol 1-phosphate + (2E,6E,10E)-geranylgeranyl diphosphate = sn-3-O-(geranylgeranyl)glycerol 1-phosphate + diphosphate. The protein operates within membrane lipid metabolism; glycerophospholipid metabolism. Its function is as follows. Prenyltransferase that catalyzes the transfer of the geranylgeranyl moiety of geranylgeranyl diphosphate (GGPP) to the C3 hydroxyl of sn-glycerol-1-phosphate (G1P). This reaction is the first ether-bond-formation step in the biosynthesis of archaeal membrane lipids. The sequence is that of Geranylgeranylglyceryl phosphate synthase from Methanosphaera stadtmanae (strain ATCC 43021 / DSM 3091 / JCM 11832 / MCB-3).